Here is a 342-residue protein sequence, read N- to C-terminus: Thiosulfate/3-mercaptopyruvate sulfurtransferase 2 (342 aa).

Rhodanese domains follow at residues 56–173 (GDAD…DVES) and 224–338 (EDKT…LPIV). C298 functions as the Cysteine persulfide intermediate in the catalytic mechanism.

In terms of tissue distribution, expressed in roots, rosette and cauline leaves, stems, flowers and siliques.

It is found in the cytoplasm. It catalyses the reaction thiosulfate + hydrogen cyanide = thiocyanate + sulfite + 2 H(+). It carries out the reaction 2-oxo-3-sulfanylpropanoate + [thioredoxin]-dithiol = [thioredoxin]-disulfide + hydrogen sulfide + pyruvate + H(+). In terms of biological role, catalyzes the transfer of a sulfur ion from a donor to cyanide or to other thiol compounds. Substrate preference is 3-mercaptopyruvate &gt; thiosulfate. Involved in embryo and seed development. The sequence is that of Thiosulfate/3-mercaptopyruvate sulfurtransferase 2 (STR2) from Arabidopsis thaliana (Mouse-ear cress).